Consider the following 141-residue polypeptide: Large ribosomal subunit protein uL22 (141 aa).

The segment at 110–141 is disordered; that stretch reads EEKKTVAKKTTTTKAPAKKTTSTKKATAKKES. Residues 117 to 134 show a composition bias toward low complexity; the sequence is KKTTTTKAPAKKTTSTKK.

This sequence belongs to the universal ribosomal protein uL22 family. As to quaternary structure, part of the 50S ribosomal subunit.

In terms of biological role, this protein binds specifically to 23S rRNA; its binding is stimulated by other ribosomal proteins, e.g. L4, L17, and L20. It is important during the early stages of 50S assembly. It makes multiple contacts with different domains of the 23S rRNA in the assembled 50S subunit and ribosome. The globular domain of the protein is located near the polypeptide exit tunnel on the outside of the subunit, while an extended beta-hairpin is found that lines the wall of the exit tunnel in the center of the 70S ribosome. The chain is Large ribosomal subunit protein uL22 from Campylobacter jejuni subsp. doylei (strain ATCC BAA-1458 / RM4099 / 269.97).